Here is a 317-residue protein sequence, read N- to C-terminus: Apolipoprotein E (317 aa).

Positions 1–18 are cleaved as a signal peptide; it reads MKVLWAALLVTFLAGCQA. Repeat copies occupy residues 80 to 101, 102 to 123, 124 to 145, 146 to 167, 168 to 189, 190 to 211, 212 to 233, and 234 to 255. The interval 80–255 is 8 X 22 AA approximate tandem repeats; sequence TLMDETMKEL…RLDEVKEQVA (176 aa). Met143 is modified (methionine sulfoxide). The residue at position 147 (Ser147) is a Phosphoserine. Positions 158 to 168 are LDL and other lipoprotein receptors binding; sequence HLRKLRKRLLR. 162 to 165 contacts heparin; the sequence is LRKR. Residues 210–290 are lipid-binding and lipoprotein association; sequence AATVGSLASQ…SWFEPLVEDM (81 aa). Position 229 to 236 (229 to 236) interacts with heparin; the sequence is GERLRARM. The tract at residues 266 to 317 is homooligomerization; that stretch reads QQISLQAEAFQARLKSWFEPLVEDMQRQWAGLVEKVQAAVGASTAPVPSDNH. Residues 278–290 form a specificity for association with VLDL region; the sequence is RLKSWFEPLVEDM.

It belongs to the apolipoprotein A1/A4/E family. Homotetramer. May interact with ABCA1; functionally associated with ABCA1 in the biogenesis of HDLs. May interact with APP/A4 amyloid-beta peptide; the interaction is extremely stable in vitro but its physiological significance is unclear. May interact with MAPT. May interact with MAP2. In the cerebrospinal fluid, interacts with secreted SORL1. Interacts with PMEL; this allows the loading of PMEL luminal fragment on ILVs to induce fibril nucleation. Post-translationally, APOE exists as multiple glycosylated and sialylated glycoforms within cells and in plasma. The extent of glycosylation and sialylation are tissue and context specific. In terms of processing, glycated in plasma VLDL. Phosphorylated by FAM20C in the extracellular medium.

The protein localises to the secreted. Its subcellular location is the extracellular space. The protein resides in the extracellular matrix. It localises to the extracellular vesicle. It is found in the endosome. The protein localises to the multivesicular body. Functionally, APOE is an apolipoprotein, a protein associating with lipid particles, that mainly functions in lipoprotein-mediated lipid transport between organs via the plasma and interstitial fluids. APOE is a core component of plasma lipoproteins and is involved in their production, conversion and clearance. Apolipoproteins are amphipathic molecules that interact both with lipids of the lipoprotein particle core and the aqueous environment of the plasma. As such, APOE associates with chylomicrons, chylomicron remnants, very low density lipoproteins (VLDL) and intermediate density lipoproteins (IDL) but shows a preferential binding to high-density lipoproteins (HDL). It also binds a wide range of cellular receptors including the LDL receptor/LDLR, the LDL receptor-related proteins LRP1, LRP2 and LRP8 and the very low-density lipoprotein receptor/VLDLR that mediate the cellular uptake of the APOE-containing lipoprotein particles. Finally, APOE also has a heparin-binding activity and binds heparan-sulfate proteoglycans on the surface of cells, a property that supports the capture and the receptor-mediated uptake of APOE-containing lipoproteins by cells. A main function of APOE is to mediate lipoprotein clearance through the uptake of chylomicrons, VLDLs, and HDLs by hepatocytes. APOE is also involved in the biosynthesis by the liver of VLDLs as well as their uptake by peripheral tissues ensuring the delivery of triglycerides and energy storage in muscle, heart and adipose tissues. By participating in the lipoprotein-mediated distribution of lipids among tissues, APOE plays a critical role in plasma and tissues lipid homeostasis. APOE is also involved in two steps of reverse cholesterol transport, the HDLs-mediated transport of cholesterol from peripheral tissues to the liver, and thereby plays an important role in cholesterol homeostasis. First, it is functionally associated with ABCA1 in the biogenesis of HDLs in tissues. Second, it is enriched in circulating HDLs and mediates their uptake by hepatocytes. APOE also plays an important role in lipid transport in the central nervous system, regulating neuron survival and sprouting. The protein is Apolipoprotein E (APOE) of Theropithecus gelada (Gelada baboon).